The primary structure comprises 198 residues: Molybdopterin synthase catalytic subunit (198 aa).

The segment covering 1–27 (MASQPPQEPTPTATSTPSTSALASLPP) has biased composition (low complexity). Residues 1 to 40 (MASQPPQEPTPTATSTPSTSALASLPPHLDPTTYPRTLTS) form a disordered region. Residues 143-144 (HR), Lys159, and 166-168 (KRE) contribute to the substrate site. The disordered stretch occupies residues 176–198 (EWRENRERDAEGKVVAEKQEERE).

The protein belongs to the MoaE family. MOCS2B subfamily. As to quaternary structure, heterotetramer; composed of 2 small (MOCS2A) and 2 large (MOCS2B) subunits.

The protein resides in the cytoplasm. The catalysed reaction is 2 [molybdopterin-synthase sulfur-carrier protein]-C-terminal-Gly-aminoethanethioate + cyclic pyranopterin phosphate + H2O = molybdopterin + 2 [molybdopterin-synthase sulfur-carrier protein]-C-terminal Gly-Gly + 2 H(+). It functions in the pathway cofactor biosynthesis; molybdopterin biosynthesis. Functionally, catalytic subunit of the molybdopterin synthase complex, a complex that catalyzes the conversion of precursor Z into molybdopterin. Acts by mediating the incorporation of 2 sulfur atoms from thiocarboxylated MOCS2A into precursor Z to generate a dithiolene group. The sequence is that of Molybdopterin synthase catalytic subunit from Aspergillus clavatus (strain ATCC 1007 / CBS 513.65 / DSM 816 / NCTC 3887 / NRRL 1 / QM 1276 / 107).